A 272-amino-acid polypeptide reads, in one-letter code: MKKTTLNIAISGALGKMGINLIHEIYHTKNVFLTAAIVKNNSPYVQKNVGKITKIGEINIPITNSLEENINKFDILIDFTNPKTTLKNLEICAVAKKNIIIGTTGFTQEEQKKIKLLSKKIGIVQSSNYSIGINLMISLLEKTTQIIGKNTDIEIIEAHHNKKIDAPSGTSLEIGKKICKTMNWDFSKQAIYERHSSMKSRANNEIGFSSIRAGNIVGEHKVLFANSGEHIEITHKAISRSIFSKGAIQAAIWLFSKNYKNGLFNMNHILNI.

NAD(+) is bound at residue 12-17 (GALGKM). Lys-39 serves as a coordination point for NADP(+). NAD(+)-binding positions include 102–104 (GTT) and 126–129 (SSNY). The active-site Proton donor/acceptor is the His-159. His-160 provides a ligand contact to (S)-2,3,4,5-tetrahydrodipicolinate. The active-site Proton donor is the Lys-163. 169–170 (GT) lines the (S)-2,3,4,5-tetrahydrodipicolinate pocket.

Belongs to the DapB family. Homotetramer.

Its subcellular location is the cytoplasm. The catalysed reaction is (S)-2,3,4,5-tetrahydrodipicolinate + NAD(+) + H2O = (2S,4S)-4-hydroxy-2,3,4,5-tetrahydrodipicolinate + NADH + H(+). The enzyme catalyses (S)-2,3,4,5-tetrahydrodipicolinate + NADP(+) + H2O = (2S,4S)-4-hydroxy-2,3,4,5-tetrahydrodipicolinate + NADPH + H(+). Its pathway is amino-acid biosynthesis; L-lysine biosynthesis via DAP pathway; (S)-tetrahydrodipicolinate from L-aspartate: step 4/4. In terms of biological role, catalyzes the conversion of 4-hydroxy-tetrahydrodipicolinate (HTPA) to tetrahydrodipicolinate. The protein is 4-hydroxy-tetrahydrodipicolinate reductase of Buchnera aphidicola subsp. Baizongia pistaciae (strain Bp).